The chain runs to 217 residues: GTP cyclohydrolase 1 (217 aa).

Cys109, His112, and Cys180 together coordinate Zn(2+).

It belongs to the GTP cyclohydrolase I family. As to quaternary structure, toroid-shaped homodecamer, composed of two pentamers of five dimers.

The catalysed reaction is GTP + H2O = 7,8-dihydroneopterin 3'-triphosphate + formate + H(+). It functions in the pathway cofactor biosynthesis; 7,8-dihydroneopterin triphosphate biosynthesis; 7,8-dihydroneopterin triphosphate from GTP: step 1/1. This is GTP cyclohydrolase 1 from Photobacterium profundum (strain SS9).